A 156-amino-acid chain; its full sequence is 6,7-dimethyl-8-ribityllumazine synthase (156 aa).

Residues F23, 57-59 (AFE), and 81-83 (AVI) contribute to the 5-amino-6-(D-ribitylamino)uracil site. Residue 86 to 87 (ST) coordinates (2S)-2-hydroxy-3-oxobutyl phosphate. H89 functions as the Proton donor in the catalytic mechanism. F114 is a binding site for 5-amino-6-(D-ribitylamino)uracil. R128 contacts (2S)-2-hydroxy-3-oxobutyl phosphate.

This sequence belongs to the DMRL synthase family.

It carries out the reaction (2S)-2-hydroxy-3-oxobutyl phosphate + 5-amino-6-(D-ribitylamino)uracil = 6,7-dimethyl-8-(1-D-ribityl)lumazine + phosphate + 2 H2O + H(+). It functions in the pathway cofactor biosynthesis; riboflavin biosynthesis; riboflavin from 2-hydroxy-3-oxobutyl phosphate and 5-amino-6-(D-ribitylamino)uracil: step 1/2. In terms of biological role, catalyzes the formation of 6,7-dimethyl-8-ribityllumazine by condensation of 5-amino-6-(D-ribitylamino)uracil with 3,4-dihydroxy-2-butanone 4-phosphate. This is the penultimate step in the biosynthesis of riboflavin. In Campylobacter fetus subsp. fetus (strain 82-40), this protein is 6,7-dimethyl-8-ribityllumazine synthase.